The chain runs to 608 residues: Elongation factor 4 (608 aa).

The tr-type G domain maps to serine 11–lysine 193. Residues aspartate 23 to threonine 28 and asparagine 140 to aspartate 143 each bind GTP.

Belongs to the TRAFAC class translation factor GTPase superfamily. Classic translation factor GTPase family. LepA subfamily.

Its subcellular location is the cell inner membrane. The enzyme catalyses GTP + H2O = GDP + phosphate + H(+). Required for accurate and efficient protein synthesis under certain stress conditions. May act as a fidelity factor of the translation reaction, by catalyzing a one-codon backward translocation of tRNAs on improperly translocated ribosomes. Back-translocation proceeds from a post-translocation (POST) complex to a pre-translocation (PRE) complex, thus giving elongation factor G a second chance to translocate the tRNAs correctly. Binds to ribosomes in a GTP-dependent manner. This Rhizobium meliloti (strain 1021) (Ensifer meliloti) protein is Elongation factor 4.